The sequence spans 884 residues: Lon protease homolog 2, peroxisomal (884 aa).

In terms of domain architecture, Lon N-terminal spans 12 to 255 (LAILPFRNKV…KATELVDRHL (244 aa)). The disordered stretch occupies residues 67 to 101 (SLLSPGVGSDSGEGGSKAPGGSAGESTKQDTKNGK). Residues 75–89 (SDSGEGGSKAPGGSA) show a composition bias toward gly residues. 408–415 (GPPGVGKT) contacts ATP. The Lon proteolytic domain occupies 689-874 (VASPGVSVGL…EEVLDHAFEG (186 aa)). Residues serine 780 and lysine 823 contribute to the active site. The Microbody targeting signal motif lies at 882–884 (SKL).

Belongs to the peptidase S16 family.

The protein resides in the peroxisome matrix. The enzyme catalyses Hydrolysis of proteins in presence of ATP.. In terms of biological role, ATP-dependent serine protease that mediates the selective degradation of misfolded and unassembled polypeptides in the peroxisomal matrix. Necessary for type 2 peroxisome targeting signal (PTS2)-containing protein processing and facilitates peroxisome matrix protein import. This is Lon protease homolog 2, peroxisomal from Oryza sativa subsp. japonica (Rice).